Reading from the N-terminus, the 130-residue chain is Small ribosomal subunit protein uS8 (130 aa).

Belongs to the universal ribosomal protein uS8 family. As to quaternary structure, part of the 30S ribosomal subunit.

Its function is as follows. One of the primary rRNA binding proteins, it binds directly to 16S rRNA central domain where it helps coordinate assembly of the platform of the 30S subunit. The chain is Small ribosomal subunit protein uS8 from Methanococcus aeolicus (strain ATCC BAA-1280 / DSM 17508 / OCM 812 / Nankai-3).